We begin with the raw amino-acid sequence, 159 residues long: Small ribosomal subunit protein uS9 (159 aa).

It belongs to the universal ribosomal protein uS9 family.

This Bradyrhizobium diazoefficiens (strain JCM 10833 / BCRC 13528 / IAM 13628 / NBRC 14792 / USDA 110) protein is Small ribosomal subunit protein uS9.